A 156-amino-acid chain; its full sequence is MSELKQIRIYTDGSCLGNPGPGGYGVVMIYKQHRKELADGFALTTNNRMELLAPIVALESLKEPCDVILTSDSQYMRQGITEWIHGWKKKGWVTASKTPVKNVDLWQRLDAAAAKHKVDWRWVKGHAGHAENERCDTLAREAAEAKPTQIDKGYQP.

Positions 3-144 (ELKQIRIYTD…CDTLAREAAE (142 aa)) constitute an RNase H type-1 domain. Aspartate 12, glutamate 50, aspartate 72, and aspartate 136 together coordinate Mg(2+).

Belongs to the RNase H family. Monomer. The cofactor is Mg(2+).

It is found in the cytoplasm. It catalyses the reaction Endonucleolytic cleavage to 5'-phosphomonoester.. In terms of biological role, endonuclease that specifically degrades the RNA of RNA-DNA hybrids. This chain is Ribonuclease H, found in Shewanella amazonensis (strain ATCC BAA-1098 / SB2B).